Consider the following 971-residue polypeptide: Translation initiation factor IF-2 (971 aa).

The span at 48-63 (DHLRKSHGATDGDKRK) shows a compositional bias: basic and acidic residues. Disordered stretches follow at residues 48-86 (DHLRKSHGATDGDKRKITLTRKHTSEIKQSDATGKARTI) and 101-381 (DVAE…STFQ). Residues 105–114 (GADQGQAQVA) show a composition bias toward low complexity. Residues 121–181 (ELKRREEEAR…EEEAATKRAA (61 aa)) show a composition bias toward basic and acidic residues. Positions 182-203 (AEAAAAQQQAAAQQAAAEQEAT) are enriched in low complexity. Basic and acidic residues predominate over residues 210–261 (DEARAAAERAAQREAAKKAEDAAREAADKARAEQEEISKRRAAAEAEARAIR). Positions 277-286 (PPKPVEPPKP) are enriched in pro residues. Positions 304–326 (ARPAVKKPAGAAAPATTQAPAGA) are enriched in low complexity. Over residues 356-369 (SSGGVDRGWRGGPK) the composition is skewed to gly residues. The tr-type G domain occupies 471–640 (PRPPVVTVMG…LLQAEVLELK (170 aa)). A G1 region spans residues 480-487 (GHVDHGKT). 480–487 (GHVDHGKT) lines the GTP pocket. Residues 505-509 (GITQH) are G2. Residues 526-529 (DTPG) form a G3 region. GTP-binding positions include 526 to 530 (DTPGH) and 580 to 583 (NKID). A G4 region spans residues 580–583 (NKID). The G5 stretch occupies residues 616-618 (SAK).

It belongs to the TRAFAC class translation factor GTPase superfamily. Classic translation factor GTPase family. IF-2 subfamily.

It localises to the cytoplasm. Functionally, one of the essential components for the initiation of protein synthesis. Protects formylmethionyl-tRNA from spontaneous hydrolysis and promotes its binding to the 30S ribosomal subunits. Also involved in the hydrolysis of GTP during the formation of the 70S ribosomal complex. In Burkholderia orbicola (strain MC0-3), this protein is Translation initiation factor IF-2.